The primary structure comprises 717 residues: RNA helicase NPH-II (717 aa).

A Helicase ATP-binding domain is found at 193–384; it reads FEIFISKKNC…IYFKNIVEIY (192 aa). 206–213 is a binding site for ATP; that stretch reads GGTGIGKT. Positions 331 to 334 match the DEXH box motif; that stretch reads DEIH. One can recognise a Helicase C-terminal domain in the interval 406-566; it reads ILKNYMPSVG…VFKYNNMDYY (161 aa).

It belongs to the DEAD box helicase family. DEAH subfamily. Monomer.

It localises to the virion. It carries out the reaction ATP + H2O = ADP + phosphate + H(+). NTP-dependent helicase that catalyzes unidirectional unwinding of 3'tailed duplex RNAs and plays an important role during transcription of early mRNAs, presumably by preventing R-loop formation behind the elongating RNA polymerase. Might also play a role in the export of newly synthesized mRNA chains out of the core into the cytoplasm. Required for replication and propagation of viral particles. The chain is RNA helicase NPH-II (NPH2) from Melanoplus sanguinipes (Migratory grasshopper).